The following is a 458-amino-acid chain: Aldehyde dehydrogenase (458 aa).

NADP(+) is bound by residues 134 to 135 (WN), 158 to 161 (KHAS), and 210 to 211 (GS). Residue E232 is the Proton acceptor of the active site. An NADP(+)-binding site is contributed by L233. C266 functions as the Nucleophile in the catalytic mechanism. Position 363 (E363) interacts with NADP(+).

It belongs to the aldehyde dehydrogenase family. In terms of assembly, monomer.

The catalysed reaction is an aldehyde + NAD(+) + H2O = a carboxylate + NADH + 2 H(+). The enzyme catalyses an aldehyde + NADP(+) + H2O = a carboxylate + NADPH + 2 H(+). It participates in carbohydrate metabolism; D-xylose degradation. In terms of biological role, aldehyde dehydrogenase able to oxidize various aldehydes such as formaldehyde, glyceraldehyde, butyraldehyde, glutaraldehyde and benzaldehyde (in vitro). Is likely involved in the oxidative D-xylose degradation pathway, catalyzing the oxidation step of 2-oxoglutarate semialdehyde to 2-oxoglutarate. Is able to use both NAD(+) and NADP(+); however, shows a preference for NADP(+). Does not display succinate semialdehyde dehydrogenase activity. The protein is Aldehyde dehydrogenase (aldh) of Paenarthrobacter nicotinovorans (Arthrobacter nicotinovorans).